Consider the following 289-residue polypeptide: MRKIKKAIIPAAGLGTRFLPATKAMPKEMLPILDKPTIQYIVEEAARAGIEDIIIVTGKHKRAIEDHFDNQKELEMILQEKGKTDLLEKVKYSTELANIFYVRQKEQKGLGHAIYSARQFIGDEPFAVLLGDDIVESDNPAIKQLIEAYEETGKSVIGVQEVDEAQTHRYGIIDPLQKFGRKYEVNEFVEKPKQGTAPSNLAIMGRYVLTPDIFDYLATQGEGAGGEIQLTDAIERLNRADQVYAYDFEGDRYDVGEKLGFVKTTIEYALKDESMHDELVEFIKKLKLN.

The protein belongs to the UDPGP type 2 family.

The enzyme catalyses alpha-D-glucose 1-phosphate + UTP + H(+) = UDP-alpha-D-glucose + diphosphate. It functions in the pathway glycolipid metabolism; diglucosyl-diacylglycerol biosynthesis. Functionally, catalyzes the formation of UDP-glucose from glucose-1-phosphate and UTP. This is an intermediate step in the biosynthesis of diglucosyl-diacylglycerol (Glc2-DAG), i.e. a glycolipid found in the membrane, which is also used as a membrane anchor for lipoteichoic acid (LTA). The polypeptide is UTP--glucose-1-phosphate uridylyltransferase 2 (gtaB2) (Staphylococcus saprophyticus subsp. saprophyticus (strain ATCC 15305 / DSM 20229 / NCIMB 8711 / NCTC 7292 / S-41)).